A 94-amino-acid chain; its full sequence is Large ribosomal subunit protein uL29 (94 aa).

Residues Ala65–Gly94 form a disordered region. Residues Arg73–Gly94 are compositionally biased toward basic residues.

This sequence belongs to the universal ribosomal protein uL29 family.

The chain is Large ribosomal subunit protein uL29 from Leptospira interrogans serogroup Icterohaemorrhagiae serovar copenhageni (strain Fiocruz L1-130).